We begin with the raw amino-acid sequence, 302 residues long: Protoheme IX farnesyltransferase (302 aa).

9 helical membrane passes run 27-47, 48-68, 97-117, 119-139, 148-168, 176-196, 219-239, 240-260, and 280-300; these read VLTL…QSIH, PVLG…AGAL, SALH…GLAL, VLAA…YTIW, IVIG…AATG, LLFA…ALFI, IQIM…WAMG, LTGA…LLLA, and LFGF…ADKV.

Belongs to the UbiA prenyltransferase family. Protoheme IX farnesyltransferase subfamily.

It localises to the cell inner membrane. The enzyme catalyses heme b + (2E,6E)-farnesyl diphosphate + H2O = Fe(II)-heme o + diphosphate. The protein operates within porphyrin-containing compound metabolism; heme O biosynthesis; heme O from protoheme: step 1/1. Converts heme B (protoheme IX) to heme O by substitution of the vinyl group on carbon 2 of heme B porphyrin ring with a hydroxyethyl farnesyl side group. The polypeptide is Protoheme IX farnesyltransferase (Rhizorhabdus wittichii (strain DSM 6014 / CCUG 31198 / JCM 15750 / NBRC 105917 / EY 4224 / RW1) (Sphingomonas wittichii)).